We begin with the raw amino-acid sequence, 1265 residues long: MTTMVNVDTLPEYEKSQIKRALELGTVMTVFSARKSTPERRTVQMIMETRQVAWSKTADKIEGFLDIMEIKEIRPGKNSKDFERAKAVRHKADCCFTIFYGTQFVLSTLSLATDSKEDAVKWLSGLKILHQEAMNASTPTMIESWLRKQIYSVDQTRRNSISLRELKTILPLVNFKVSGIKFLKDKLVEIGAQKDELSFEQFHLFYKKLMFEQQKSILDEFKKDSSVFILGNTDRPDASAVYLQDFQRFLLHEQQELWAQDLNKVRERMTKFIDDTMRETAEPFLFVDEFLTYLFSRENSIWDEKYDAVDMQDMNNPLSHYWISSSHNTYLTGDQLRSESSTEAYIRCLRAGCRCIELDCWDGPDGKPIIYHGWTRTTKIKFDDVVQAIRDHAFVTSSFPVILSIEEHCSVEQQRHMAKVFKEVLGDLLLTKPTEASADQLPSPSQLREKIIIKHKKLGPRGDVDVNVEDKKDEHKTQGELYMWDSIDQKWTRHYCAIADAKLSFSDDIEQTVEEDPVQDTPPTELHFGEKWFHKKVESRTSAEKLLQEYCAETGAKDGTFLVRESETFPNDYTLSFWRSGRVQHCRIRSTMEGGVMKYYLTDNLTFNSIYALIQHYREAHLRCAEFELRLTDPVPNPNPHESKPWYYDRLSRGEAEDMLMRIPRDGAFLIRKREGTDSYAITFRARGKVKHCRINRDGRHFVLGTSAYFESLVELVSYYEKHALYRKMRLRYPVTPELLERYNMERDINSLYDVSRMYVDPSEINPSMPQRTVKALYDYKAKRSDELTFCRGALIHNVSKEPGGWWKGDYGTRIQQYFPSNYVEDISAGDAEEMEKQIIEDNPLGSLCRGILDLNTYNVVKAPQGKNQKAFVFILEPKKQGDPPVEFATDRVEELFEWFQSIREITWKIDTKENNMKYWERNQSIAIELSDLVVYCKPTSKTKDHLENPDFREIRSFVETKADSIVRQKPVDLLRYNQKGLTRVYPKGQRVDSSNYDPFRLWLCGSQMVALNFQTPDKYMQMNHALFSLNGRTGYVLQPESMRSEKYDPMPPESQRKILMTLTVKVLGARHLPKLGRSIACPFVEVEICGAEYDSNKFKTTVVNDNGLSPVWAPTQEKVTFEIYDPNLAFLRFLVYEEDMFSDPNFLAHATYPIKGIKSGFRSVPLKNGYSEDIELASLLVFCEMRPVLESEEELYSSCRQLRRRQEELNNQLFLYDTHQNLRGANRDALVKEFNVNENQLRLYQEKCNRRLREKRVSNSRFYS.

The region spanning 20 to 131 (RALELGTVMT…WLSGLKILHQ (112 aa)) is the PH domain. The PI-PLC X-box domain occupies 312–456 (QDMNNPLSHY…LREKIIIKHK (145 aa)). Active-site residues include histidine 327 and histidine 372. SH2 domains follow at residues 532–635 (WFHK…TDPV) and 646–735 (WYYD…RYPV). Tyrosine 753 and tyrosine 759 each carry phosphotyrosine; by BTK. One can recognise an SH3 domain in the interval 769–829 (MPQRTVKALY…PSNYVEDISA (61 aa)). The PI-PLC Y-box domain maps to 930-1044 (LSDLVVYCKP…GYVLQPESMR (115 aa)). The C2 domain maps to 1038–1169 (LQPESMRSEK…SGFRSVPLKN (132 aa)). Tyrosine 1197 bears the Phosphotyrosine; by BTK mark. A phosphotyrosine mark is found at tyrosine 1217 and tyrosine 1245.

In terms of assembly, part of a complex composed of EEIG1, TNFRSF11A/RANK, PLCG2, GAB2, TEC and BTK; complex formation increases in the presence of TNFSF11/RANKL. Interacts (via SH2 domain) with CSF1R (tyrosine phosphorylated). Interacts constitutively with THEMIS2. Requires Ca(2+) as cofactor. In terms of processing, phosphorylated on tyrosine residues by CSF1R. Phosphorylated on tyrosine residues by BTK and SYK; upon ligand-induced activation of a variety of growth factor receptors and immune system receptors. Phosphorylation leads to increased phospholipase activity.

The protein localises to the membrane raft. The catalysed reaction is a 1,2-diacyl-sn-glycero-3-phospho-(1D-myo-inositol-4,5-bisphosphate) + H2O = 1D-myo-inositol 1,4,5-trisphosphate + a 1,2-diacyl-sn-glycerol + H(+). In terms of biological role, the production of the second messenger molecules diacylglycerol (DAG) and inositol 1,4,5-trisphosphate (IP3) is mediated by activated phosphatidylinositol-specific phospholipase C enzymes. It is a crucial enzyme in transmembrane signaling. This is 1-phosphatidylinositol 4,5-bisphosphate phosphodiesterase gamma-2 from Rattus norvegicus (Rat).